The following is a 171-amino-acid chain: 3-hydroxyanthranilate 3,4-dioxygenase (171 aa).

R44 contacts O2. H48, E54, and H92 together coordinate Fe cation. E54 is a binding site for substrate. Residues R96 and E106 each coordinate substrate. Positions 121, 126, 160, and 163 each coordinate a divalent metal cation.

Belongs to the 3-HAO family. The cofactor is Fe(2+).

Its subcellular location is the cytoplasm. The catalysed reaction is 3-hydroxyanthranilate + O2 = (2Z,4Z)-2-amino-3-carboxymuconate 6-semialdehyde. It functions in the pathway cofactor biosynthesis; NAD(+) biosynthesis; quinolinate from L-kynurenine: step 3/3. Catalyzes the oxidative ring opening of 3-hydroxyanthranilate to 2-amino-3-carboxymuconate semialdehyde, which spontaneously cyclizes to quinolinate. The protein is 3-hydroxyanthranilate 3,4-dioxygenase of Yarrowia lipolytica (strain CLIB 122 / E 150) (Yeast).